We begin with the raw amino-acid sequence, 898 residues long: Endoplasmic reticulum metallopeptidase 1 (898 aa).

Residue methionine 1 is modified to N-acetylmethionine. The disordered stretch occupies residues 1–55; that stretch reads MEWSSESAAVRRHRGTAERREGEAAASHRQREASAQEDAKGVGRMWGKTENGGGS. The Cytoplasmic segment spans residues 1–66; it reads MEWSSESAAV…VAKTALSEAR (66 aa). A compositionally biased stretch (basic and acidic residues) spans 29–41; the sequence is RQREASAQEDAKG. The helical transmembrane segment at 67–87 threads the bilayer; that stretch reads TALALALYLLALRALVQLSLQ. Residues 88 to 393 are Lumenal-facing; that stretch reads RLVLSRTSGL…SSSEYRHGSM (306 aa). An N-linked (GlcNAc...) asparagine glycan is attached at asparagine 176. Cysteine 198 and cysteine 216 form a disulfide bridge. Residues histidine 199 and aspartate 211 each contribute to the Zn(2+) site. Residue glutamate 245 is the Proton acceptor of the active site. Glutamate 246, glutamate 272, and histidine 348 together coordinate Zn(2+). The chain crosses the membrane as a helical span at residues 394–414; the sequence is VFFDVLGLLVIAYPSRVGSII. Over 415-451 the chain is Cytoplasmic; it reads NYMVVMAVVLYLGKKLLRPKHRNANYMRDFLCGLGIT. Residues 452–472 traverse the membrane as a helical segment; sequence FISWFTSLVTVLIIAVFISLI. Topologically, residues 473-480 are lumenal; it reads GQSLSWYN. A helical membrane pass occupies residues 481–501; sequence YFYIAVCLYGTATVAKIIFIH. Residues 502–515 are Cytoplasmic-facing; sequence TLAKRFYYMNASDL. Residues 516-538 form a helical membrane-spanning segment; the sequence is YLGELFFDTSLFVHCAFLVALTY. Residues 539 to 542 lie on the Lumenal side of the membrane; sequence QGFC. A helical membrane pass occupies residues 543–562; sequence SAFMSAVWVVFPLLTKLCVY. Over 563-573 the chain is Cytoplasmic; the sequence is KDFKKHGAQGR. Residues 574–594 form a helical membrane-spanning segment; sequence FVALYLLGMFIPYLYGLYLIW. Residues 595 to 615 lie on the Lumenal side of the membrane; the sequence is AVFEMFTPILGRSGSEIPPDV. The chain crosses the membrane as a helical span at residues 616 to 636; that stretch reads VLASILAVCVMILSSYFITFI. Residues 637-645 are Cytoplasmic-facing; it reads YLVNSTKKT. A helical membrane pass occupies residues 646-666; the sequence is ILTLILVCAVTFLLVCSGAFF. The Lumenal portion of the chain corresponds to 667–898; the sequence is PYSSNPESPK…WVSTYSLFVF (232 aa). Asparagine 724 is a glycosylation site (N-linked (GlcNAc...) asparagine).

This sequence belongs to the peptidase M28 family. Zn(2+) serves as cofactor.

It is found in the endoplasmic reticulum membrane. Functionally, within the ovary, required for the organization of somatic cells and oocytes into discrete follicular structures. This chain is Endoplasmic reticulum metallopeptidase 1, found in Mus musculus (Mouse).